The chain runs to 465 residues: E3 ubiquitin-protein ligase TRIM15 (465 aa).

The segment at 16–61 (CTLCVGPLEDAVTAPCGHTFCRLCLPTLSQMGAQSSGKILLCPLCQ) adopts an RING-type zinc-finger fold. The segment at 78–119 (LGETYCEEHGEKIYFFCENDAEFLCVFCREGPTHQAHTVGFL) adopts a B box-type zinc-finger fold. The Zn(2+) site is built by Cys83, His86, Cys105, and His111. A coiled-coil region spans residues 126–229 (YRDRLRSRLE…VKELEEKCQQ (104 aa)). The 190-residue stretch at 276 to 465 (EMMRMFSENL…KKGSCLTLKG (190 aa)) folds into the B30.2/SPRY domain.

This sequence belongs to the TRIM/RBCC family. As to quaternary structure, interacts with paxillin/PXN; this interaction recruits TRIM15 to focal adhesions. Interacts with TRIM8; this interaction prevents TRIM8 cytoplasmic translocation.

The protein resides in the cytoplasm. Its subcellular location is the nucleus. The protein localises to the cell junction. It localises to the focal adhesion. The enzyme catalyses S-ubiquitinyl-[E2 ubiquitin-conjugating enzyme]-L-cysteine + [acceptor protein]-L-lysine = [E2 ubiquitin-conjugating enzyme]-L-cysteine + N(6)-ubiquitinyl-[acceptor protein]-L-lysine.. Its function is as follows. E3 ubiquitin ligase that plays a role in several processes including innate antiviral immnity, cell migration and chemotaxis. Acts as a 'Lys-63'-specific ubiquitin ligase for MAPK1/ERK2 and MAPK3/ERK1, promoting their activation by facilitating their interaction with MAP2K1 and MAP2K2. Also plays a role in cell migration and chemotaxis by acting as a stable focal adhesion component upon recruitment by multi-adapter protein paxillin/PXN. Functions in the RIGI-mediated interferon induction pathway upstream or at the level of MAVS. Inhibits NF-kappa-B activation by turnover of 'Lys-63'-linked ubiquitination of MAP3K7/TAK1. Mechanistically, prevents TRIM8 cytoplasmic translocation and thus inhibits TRIM8-mediated 'Lys-63'-linked polyubiquitination of MAP3K7/TAK1 in the cytoplasm. Also has an important regulatory effect on the activation of hepatic stellate cells (HSCs). The chain is E3 ubiquitin-protein ligase TRIM15 (TRIM15) from Macaca mulatta (Rhesus macaque).